The following is a 388-amino-acid chain: Chorismate synthase (388 aa).

NADP(+) is bound by residues Arg-39 and Arg-45. Residues 130–132 (RSS), 251–252 (NA), Gly-296, 311–315 (KPIPT), and Arg-337 contribute to the FMN site.

This sequence belongs to the chorismate synthase family. As to quaternary structure, homotetramer. It depends on FMNH2 as a cofactor.

It catalyses the reaction 5-O-(1-carboxyvinyl)-3-phosphoshikimate = chorismate + phosphate. It participates in metabolic intermediate biosynthesis; chorismate biosynthesis; chorismate from D-erythrose 4-phosphate and phosphoenolpyruvate: step 7/7. Functionally, catalyzes the anti-1,4-elimination of the C-3 phosphate and the C-6 proR hydrogen from 5-enolpyruvylshikimate-3-phosphate (EPSP) to yield chorismate, which is the branch point compound that serves as the starting substrate for the three terminal pathways of aromatic amino acid biosynthesis. This reaction introduces a second double bond into the aromatic ring system. This is Chorismate synthase from Streptococcus pyogenes serotype M28 (strain MGAS6180).